A 192-amino-acid polypeptide reads, in one-letter code: MDFKIEYTWDGFPVRHEPVCVRLSPCEQGVKMEVSAPLFNDPPSPLGEPGKPFSELWNYEVVEAFFLNDTTKQYLEVELCPHGQHLVLLLAGRRNVWKKELPLSFKASRGGTNWEGEAYIPWSYFPPNVTKFNSFAIHGSNDRRVYEALYPVPQHELQQGQKPDFHRLEYFKPFSFNTLLGEEWRQPEPDLW.

This sequence belongs to the UPF0462 family.

This Mus musculus (Mouse) protein is UPF0462 protein C4orf33 homolog (D3Ertd751e).